A 294-amino-acid polypeptide reads, in one-letter code: HTH-type transcriptional regulator DgdR (294 aa).

Residues 14-70 (LEIDLLRSFVVIAEVRALSRAAARVGRTQSALSQQMKRLEDIVDQPLFQRTGRGVVL) enclose the HTH lysR-type domain. The segment at residues 31–50 (LSRAAARVGRTQSALSQQMK) is a DNA-binding region (H-T-H motif).

Belongs to the LysR transcriptional regulatory family.

The protein is HTH-type transcriptional regulator DgdR (dgdR) of Burkholderia cepacia (Pseudomonas cepacia).